A 636-amino-acid polypeptide reads, in one-letter code: Probable potassium transport system protein Kup (636 aa).

The next 12 membrane-spanning stretches (helical) occupy residues 22–42 (MGLL…SPLY), 64–84 (ILSL…VMFI), 114–134 (ALMV…SMIT), 150–170 (FEGI…ALFL), 182–202 (LFGP…VHGI), 220–240 (FFIV…LALT), 261–281 (WFAL…AILL), 293–313 (LLAP…ATVI), 351–371 (IYIG…VIGF), 383–403 (VAVT…MLLL), 408–428 (PVLA…FFAA), and 433–453 (IVQG…LMST).

It belongs to the HAK/KUP transporter (TC 2.A.72) family.

The protein localises to the cell inner membrane. The catalysed reaction is K(+)(in) + H(+)(in) = K(+)(out) + H(+)(out). Functionally, transport of potassium into the cell. Likely operates as a K(+):H(+) symporter. This Pseudomonas entomophila (strain L48) protein is Probable potassium transport system protein Kup.